A 208-amino-acid polypeptide reads, in one-letter code: Guanylate kinase (208 aa).

Positions Gly4–Arg185 constitute a Guanylate kinase-like domain. Ala11–Ser18 contributes to the ATP binding site.

This sequence belongs to the guanylate kinase family.

The protein resides in the cytoplasm. It carries out the reaction GMP + ATP = GDP + ADP. Functionally, essential for recycling GMP and indirectly, cGMP. The chain is Guanylate kinase from Mannheimia succiniciproducens (strain KCTC 0769BP / MBEL55E).